The primary structure comprises 567 residues: Oxygen-dependent choline dehydrogenase (567 aa).

Position 4-33 (4-33 (DYIIIGAGSAGNVLAARLTEDADVTVLLLE)) interacts with FAD. His-473 (proton acceptor) is an active-site residue.

This sequence belongs to the GMC oxidoreductase family. FAD serves as cofactor.

It carries out the reaction choline + A = betaine aldehyde + AH2. It catalyses the reaction betaine aldehyde + NAD(+) + H2O = glycine betaine + NADH + 2 H(+). It participates in amine and polyamine biosynthesis; betaine biosynthesis via choline pathway; betaine aldehyde from choline (cytochrome c reductase route): step 1/1. Its function is as follows. Involved in the biosynthesis of the osmoprotectant glycine betaine. Catalyzes the oxidation of choline to betaine aldehyde and betaine aldehyde to glycine betaine at the same rate. The polypeptide is Oxygen-dependent choline dehydrogenase (Yersinia pestis bv. Antiqua (strain Antiqua)).